The following is a 320-amino-acid chain: Beta-carotene 4-ketolase 3 (320 aa).

It catalyses the reaction echinenone + 2 AH2 + 2 O2 = canthaxanthin + 2 A + 3 H2O. It carries out the reaction all-trans-beta-carotene + 2 AH2 + 2 O2 = echinenone + 2 A + 3 H2O. It participates in carotenoid biosynthesis. Involved in the biosynthesis of ketocarotenoids which are powerful anti-oxidative molecules. Catalyzes the conversion of beta-carotene to canthaxanthin via echinenone. The sequence is that of Beta-carotene 4-ketolase 3 from Haematococcus lacustris (Green alga).